The following is a 416-amino-acid chain: Enterobactin exporter EntS (416 aa).

Residues 1–21 lie on the Cytoplasmic side of the membrane; sequence MNKQSWLLNLSLLKTHPAFRA. A helical membrane pass occupies residues 22-42; the sequence is VFLARFISIVSLGLLGVAVPV. Residues 43-55 lie on the Periplasmic side of the membrane; that stretch reads QIQMMTHSTWQVG. Residues 56–76 traverse the membrane as a helical segment; it reads LSVTLTGGAMFVGLMVGGVLA. Residues 77-83 lie on the Cytoplasmic side of the membrane; sequence DRYERKK. A helical transmembrane segment spans residues 84-104; the sequence is VILLARGTCGIGFIGLCLNAL. The Periplasmic portion of the chain corresponds to 105–109; it reads LPEPS. Residues 110–130 traverse the membrane as a helical segment; the sequence is LLAIYLLGLWDGFFASLGVTA. Topologically, residues 131–156 are cytoplasmic; that stretch reads LLAATPALVGRENLMQAGAITMLTVR. The chain crosses the membrane as a helical span at residues 157–177; it reads LGSVISPMIGGLLLATGGVAW. Position 178 (Asn-178) is a topological domain, periplasmic. Residues 179–199 traverse the membrane as a helical segment; sequence YGLAAAGTFITLLPLLSLPAL. At 200-218 the chain is on the cytoplasmic side; it reads PPPPQPREHPLKSLLAGFR. A helical transmembrane segment spans residues 219-239; the sequence is FLLASPLVGGIALLGGLLTMA. Over 240-256 the chain is Periplasmic; the sequence is SAVRVLYPALADNWQMS. The helical transmembrane segment at 257 to 277 threads the bilayer; sequence AAQIGFLYAAIPLGAAIGALT. At 278–287 the chain is on the cytoplasmic side; sequence SGKLAHSARP. The chain crosses the membrane as a helical span at residues 288 to 307; the sequence is GLLMLLSTLGSFLAIGLFGL. The Periplasmic segment spans residues 308–313; that stretch reads MPMWIL. A helical transmembrane segment spans residues 314–336; sequence GVVCLALFGWLSAVSSLLQYTML. The Cytoplasmic portion of the chain corresponds to 337 to 356; it reads QTQTPEAMLGRINGLWTAQN. Residues 357–377 form a helical membrane-spanning segment; that stretch reads VTGDAIGAALLGGLGAMMTPV. A topological domain (periplasmic) is located at residue Ala-378. The chain crosses the membrane as a helical span at residues 379-399; it reads SASASGFGLLIIGVLLLLVLV. At 400–416 the chain is on the cytoplasmic side; sequence ELRRFRQTPPQMTASDS.

The protein belongs to the major facilitator superfamily. EntS (TC 2.A.1.38) family.

Its subcellular location is the cell inner membrane. Functionally, component of an export pathway for enterobactin. The protein is Enterobactin exporter EntS of Escherichia coli O7:K1 (strain IAI39 / ExPEC).